The following is a 260-amino-acid chain: Neuraminyllactose-binding hemagglutinin (260 aa).

Residues 1–27 (MRANNHFKDFAWKKCLLGASVVALLVG) form the signal peptide. Residue Cys-28 is the site of N-palmitoyl cysteine attachment. Cys-28 carries S-diacylglycerol cysteine lipidation. Residues 134–139 (KRTIQK) are N-acetyl-neuraminyl-alpha(2,3)-lactose binding motif.

Its subcellular location is the cell outer membrane. The polypeptide is Neuraminyllactose-binding hemagglutinin (hpaA) (Helicobacter pylori (Campylobacter pylori)).